The primary structure comprises 117 residues: Large ribosomal subunit protein bL19 (117 aa).

Belongs to the bacterial ribosomal protein bL19 family.

Its function is as follows. This protein is located at the 30S-50S ribosomal subunit interface and may play a role in the structure and function of the aminoacyl-tRNA binding site. This chain is Large ribosomal subunit protein bL19, found in Cutibacterium acnes (strain DSM 16379 / KPA171202) (Propionibacterium acnes).